Reading from the N-terminus, the 374-residue chain is Secondary metabolism regulator laeA (374 aa).

Residues 1 to 75 form a disordered region; it reads MFEMGPVGTR…NRNGSPSMSP (75 aa). A compositionally biased stretch (polar residues) spans 23–40; that stretch reads SYHSPTSSDRGRSRQNSD. M207 carries the post-translational modification S-methylmethionine.

Belongs to the methyltransferase superfamily. LaeA methyltransferase family. In terms of assembly, component of the heterotrimeric velvet complex composed of laeA, veA and velB; VeA acting as a bridging protein between laeA and velB. In terms of processing, self-methylates at Met-207.

It localises to the nucleus. The enzyme catalyses L-methionyl-[protein] + S-adenosyl-L-methionine = S-methyl-L-methionyl-[protein] + S-adenosyl-L-homocysteine. Methyltransferase that performs automethylation at Met-207. No other methyl-accepting substrate has been identified yet. Component of the velvet transcription factor complex that acts as a global regulator for secondary metabolite gene expression. Controls the expression of the sterigmatocystin, penicillin, and lovastatin gene clusters. Controls light-dependent formation of the velB-vosA complex, veA protein modification, and is required for light-mediated inhibition of sexual development. Within the velvet complex, controls light-dependent secondary metabolism. Involved in the defense response against Drosophila melanogaster larval grazing. This Emericella nidulans (Aspergillus nidulans) protein is Secondary metabolism regulator laeA.